A 217-amino-acid polypeptide reads, in one-letter code: Deoxyribose-phosphate aldolase (217 aa).

Catalysis depends on Asp-89, which acts as the Proton donor/acceptor. Catalysis depends on Lys-151, which acts as the Schiff-base intermediate with acetaldehyde. Lys-180 functions as the Proton donor/acceptor in the catalytic mechanism.

The protein belongs to the DeoC/FbaB aldolase family. DeoC type 1 subfamily.

The protein resides in the cytoplasm. The enzyme catalyses 2-deoxy-D-ribose 5-phosphate = D-glyceraldehyde 3-phosphate + acetaldehyde. It functions in the pathway carbohydrate degradation; 2-deoxy-D-ribose 1-phosphate degradation; D-glyceraldehyde 3-phosphate and acetaldehyde from 2-deoxy-alpha-D-ribose 1-phosphate: step 2/2. In terms of biological role, catalyzes a reversible aldol reaction between acetaldehyde and D-glyceraldehyde 3-phosphate to generate 2-deoxy-D-ribose 5-phosphate. The sequence is that of Deoxyribose-phosphate aldolase from Mycoplasma mobile (strain ATCC 43663 / 163K / NCTC 11711) (Mesomycoplasma mobile).